The primary structure comprises 1331 residues: uncharacterized protein (1331 aa).

8 helical membrane passes run 373-393, 487-507, 534-554, 579-599, 653-673, 1206-1226, 1255-1275, and 1297-1317; these read VIGVGISPDFVYPVFSASLIV, ALFLTIAILTVAIIVSILILI, LLIFGLIPAIVGAISGYSFGI, VVGLLFFSLFVILIMSSISLL, LVFLTLMSSFTMMILNLSFAT, VIAVIIPIIMLIILLVSTTLI, IPLFAFGLLISIPFSIYLIAL, and AIGSMLVLLAVLSITFVLNWL.

It belongs to the ABC-4 integral membrane protein family.

Its subcellular location is the cell membrane. This is an uncharacterized protein from Mycoplasma genitalium (strain ATCC 33530 / DSM 19775 / NCTC 10195 / G37) (Mycoplasmoides genitalium).